A 215-amino-acid chain; its full sequence is Thiamine-phosphate synthase (215 aa).

4-amino-2-methyl-5-(diphosphooxymethyl)pyrimidine contacts are provided by residues 42 to 46 and Asp-77; that span reads QYREK. Mg(2+) contacts are provided by Asp-78 and Asp-97. Ser-116 is a binding site for 4-amino-2-methyl-5-(diphosphooxymethyl)pyrimidine. 143 to 145 is a 2-[(2R,5Z)-2-carboxy-4-methylthiazol-5(2H)-ylidene]ethyl phosphate binding site; that stretch reads TKS. Position 146 (Lys-146) interacts with 4-amino-2-methyl-5-(diphosphooxymethyl)pyrimidine. Residues Gly-174 and 194 to 195 each bind 2-[(2R,5Z)-2-carboxy-4-methylthiazol-5(2H)-ylidene]ethyl phosphate; that span reads IS.

The protein belongs to the thiamine-phosphate synthase family. Mg(2+) serves as cofactor.

The enzyme catalyses 2-[(2R,5Z)-2-carboxy-4-methylthiazol-5(2H)-ylidene]ethyl phosphate + 4-amino-2-methyl-5-(diphosphooxymethyl)pyrimidine + 2 H(+) = thiamine phosphate + CO2 + diphosphate. The catalysed reaction is 2-(2-carboxy-4-methylthiazol-5-yl)ethyl phosphate + 4-amino-2-methyl-5-(diphosphooxymethyl)pyrimidine + 2 H(+) = thiamine phosphate + CO2 + diphosphate. It catalyses the reaction 4-methyl-5-(2-phosphooxyethyl)-thiazole + 4-amino-2-methyl-5-(diphosphooxymethyl)pyrimidine + H(+) = thiamine phosphate + diphosphate. It participates in cofactor biosynthesis; thiamine diphosphate biosynthesis; thiamine phosphate from 4-amino-2-methyl-5-diphosphomethylpyrimidine and 4-methyl-5-(2-phosphoethyl)-thiazole: step 1/1. Its function is as follows. Condenses 4-methyl-5-(beta-hydroxyethyl)thiazole monophosphate (THZ-P) and 2-methyl-4-amino-5-hydroxymethyl pyrimidine pyrophosphate (HMP-PP) to form thiamine monophosphate (TMP). The sequence is that of Thiamine-phosphate synthase from Limosilactobacillus reuteri (strain DSM 20016) (Lactobacillus reuteri).